A 429-amino-acid chain; its full sequence is MANTDAFFSRPLAETDPDIFGAIEKELGRQRHEIELIASENIVSRAVLEAQGSIMTNKYAEGYPGKRYYGGCQFVDIAEELAIERAKKLFGVNFANVQPNSGSQMNQAVFLALLQPGDTFMGLDLNSGGHLTHGSPVNMSGKWFNVVSYGVRQDDNLLDMDAVAESARKHKPKLIIAGGTAYSRIWDWKRFREIADEVGAYLMVDMAHIAGLVAGNQHPSPFPHCHVATTTTHKSLRGPRGGMILTNDEDLAKKFNSAVFPGLQGGPLMHVIAAKAVAFGEALQPEFQDYAAQVVKNAKALSETLVKGGLDIVSGGTDNHLMLVDLRKKNATGKRAEAALGRAYVTCNKNGIPFDPEKPFVTSGVRLGTPAGTTRGFKEAEFIEIGNLIVEVLDGLKVANSDEGNSAVEASVRDKVIGLTGRFPMYPYL.

Residues L125 and 129–131 (GHL) each bind (6S)-5,6,7,8-tetrahydrofolate. K234 bears the N6-(pyridoxal phosphate)lysine mark.

It belongs to the SHMT family. In terms of assembly, homodimer. Pyridoxal 5'-phosphate serves as cofactor.

The protein resides in the cytoplasm. The catalysed reaction is (6R)-5,10-methylene-5,6,7,8-tetrahydrofolate + glycine + H2O = (6S)-5,6,7,8-tetrahydrofolate + L-serine. It functions in the pathway one-carbon metabolism; tetrahydrofolate interconversion. It participates in amino-acid biosynthesis; glycine biosynthesis; glycine from L-serine: step 1/1. Functionally, catalyzes the reversible interconversion of serine and glycine with tetrahydrofolate (THF) serving as the one-carbon carrier. This reaction serves as the major source of one-carbon groups required for the biosynthesis of purines, thymidylate, methionine, and other important biomolecules. Also exhibits THF-independent aldolase activity toward beta-hydroxyamino acids, producing glycine and aldehydes, via a retro-aldol mechanism. The polypeptide is Serine hydroxymethyltransferase (Allorhizobium ampelinum (strain ATCC BAA-846 / DSM 112012 / S4) (Agrobacterium vitis (strain S4))).